Here is a 126-residue protein sequence, read N- to C-terminus: Large ribosomal subunit protein bL17 (126 aa).

It belongs to the bacterial ribosomal protein bL17 family. Part of the 50S ribosomal subunit. Contacts protein L32.

The protein is Large ribosomal subunit protein bL17 of Nitrosococcus oceani (strain ATCC 19707 / BCRC 17464 / JCM 30415 / NCIMB 11848 / C-107).